The primary structure comprises 614 residues: BTB/POZ domain-containing protein At5g48800 (614 aa).

Positions 43-111 (SDITIEVNGG…CYGINFEITS (69 aa)) constitute a BTB domain. In terms of domain architecture, NPH3 spans 219 to 484 (DWWIEDLSVL…VQVLYFEQLK (266 aa)). A Phosphotyrosine modification is found at Tyr-425. 2 disordered regions span residues 492–525 (SYSD…KDNY) and 583–614 (GHSS…ASTD). Positions 507–521 (SWRINSGALSATMSP) are enriched in polar residues. Positions 522–562 (KDNYASLRRENRELKLELARLRMRLNDLEKEHICMKRDMQR) form a coiled coil. Low complexity predominate over residues 583 to 597 (GHSSSRGSSSPSKQS).

It belongs to the NPH3 family.

It functions in the pathway protein modification; protein ubiquitination. Functionally, may act as a substrate-specific adapter of an E3 ubiquitin-protein ligase complex (CUL3-RBX1-BTB) which mediates the ubiquitination and subsequent proteasomal degradation of target proteins. This is BTB/POZ domain-containing protein At5g48800 from Arabidopsis thaliana (Mouse-ear cress).